We begin with the raw amino-acid sequence, 648 residues long: MADNTQRQRESISLTPMAHGLENMGAEFLESMEEGRLPHSHSSLPEGEGGLNKAERKAFSRWRSLQPTVQARSFCREHRQLFGWICKGLLSTACLGFLMVACLLDLQRALALLIITCVVLVFLAYDLLKRLLGSKLRRCVKFQGHSCLSLWLKRGLALAAGVGLILWLSLDTAQRPEQLVSFAGICVFLVLLFAGSKHHRAVSWRAVSWGLGLQFVLGLFVIRTEPGFIAFQWLGDQIQVFLSYTEAGSSFVFGEALVKDVFAFQVLPIIIFFSCVMSVLYYLGLMQWVILKIAWLMQVTMGTSATETLSVAGNIFVSQTEAPLLIRPYLADMTLSEVHVVMTGGYATIAGSLLGAYISFGIDAASLIAASVMAAPCALALSKLVYPEVEESKFRSENGVKLTYGDAQNLLEAASAGAAISVKVVANIAANLIAFLAVLAFVNAALSWLGDMVDIQGLSFQLICSYVLRPVAFLMGVAWEDCPVVAELLGIKFFLNEFVAYQELSQYKQRRLAGAEEWLGDKKQWISVRAEILTTYALCGFANFSSIGIMLGGLTSLVPQRRSDFSQIVLRALITGAFVSLLNACVAGILYVPRGVEVDCVSLLNQTVSSSSFEVYLCCRQVFQSTSSEFSQVALDNCCRFYNHTVCT.

The Cytoplasmic segment spans residues 1–80 (MADNTQRQRE…ARSFCREHRQ (80 aa)). Residues 81–104 (LFGWICKGLLSTACLGFLMVACLL) form a helical membrane-spanning segment. Over 105–109 (DLQRA) the chain is Extracellular. A helical membrane pass occupies residues 110–128 (LALLIITCVVLVFLAYDLL). Topologically, residues 129–147 (KRLLGSKLRRCVKFQGHSC) are cytoplasmic. Residues 148 to 167 (LSLWLKRGLALAAGVGLILW) traverse the membrane as a helical segment. At 168 to 178 (LSLDTAQRPEQ) the chain is on the extracellular side. The helical transmembrane segment at 179 to 195 (LVSFAGICVFLVLLFAG) threads the bilayer. Topologically, residues 196 to 201 (SKHHRA) are cytoplasmic. A helical transmembrane segment spans residues 202 to 222 (VSWRAVSWGLGLQFVLGLFVI). Topologically, residues 223–261 (RTEPGFIAFQWLGDQIQVFLSYTEAGSSFVFGEALVKDV) are extracellular. Residues 262–283 (FAFQVLPIIIFFSCVMSVLYYL) form a helical membrane-spanning segment. The Cytoplasmic segment spans residues 284–294 (GLMQWVILKIA). A helical transmembrane segment spans residues 295-318 (WLMQVTMGTSATETLSVAGNIFVS). Residues 319–337 (QTEAPLLIRPYLADMTLSE) are Extracellular-facing. The chain crosses the membrane as a helical span at residues 338–360 (VHVVMTGGYATIAGSLLGAYISF). Topologically, residues 361–366 (GIDAAS) are cytoplasmic. The chain crosses the membrane as a helical span at residues 367–386 (LIAASVMAAPCALALSKLVY). The Extracellular portion of the chain corresponds to 387–423 (PEVEESKFRSENGVKLTYGDAQNLLEAASAGAAISVK). A helical membrane pass occupies residues 424 to 446 (VVANIAANLIAFLAVLAFVNAAL). Residues 447–457 (SWLGDMVDIQG) are Cytoplasmic-facing. Residues 458–479 (LSFQLICSYVLRPVAFLMGVAW) traverse the membrane as a helical segment. The Extracellular segment spans residues 480–534 (EDCPVVAELLGIKFFLNEFVAYQELSQYKQRRLAGAEEWLGDKKQWISVRAEILT). A helical transmembrane segment spans residues 535-558 (TYALCGFANFSSIGIMLGGLTSLV). The Cytoplasmic portion of the chain corresponds to 559–569 (PQRRSDFSQIV). A helical membrane pass occupies residues 570–592 (LRALITGAFVSLLNACVAGILYV). At 593 to 648 (PRGVEVDCVSLLNQTVSSSSFEVYLCCRQVFQSTSSEFSQVALDNCCRFYNHTVCT) the chain is on the extracellular side. N-linked (GlcNAc...) asparagine glycosylation is found at N605 and N643.

This sequence belongs to the concentrative nucleoside transporter (CNT) (TC 2.A.41) family. Post-translationally, N-glycosylated. N-glycosylation is required for localization to the plasma membrane and the transporter activity. In terms of tissue distribution, expressed predominantly in the brush-border membranes of the polarized epithelial cells of jejunum and renal cortical tubules and in the bile canalicular membranes of liver parenchymal cells.

The protein resides in the cell membrane. The protein localises to the apical cell membrane. The enzyme catalyses uridine(out) + Na(+)(out) = uridine(in) + Na(+)(in). The catalysed reaction is thymidine(out) + Na(+)(out) = thymidine(in) + Na(+)(in). It catalyses the reaction cytidine(out) + Na(+)(out) = cytidine(in) + Na(+)(in). It carries out the reaction adenosine(out) + Na(+)(out) = adenosine(in) + Na(+)(in). Its activity is regulated as follows. Due to its high apparent affinity but slow transport, adenosine could act as a negative regulator of pyrimidine transport under some conditions. In terms of biological role, sodium and pyrimidine nucleoside symporter of the plasma membrane that imports uridine, thymidine and cytidine into cells by coupling their transport to the transmembrane sodium electrochemical gradient. Also transports adenosine, an atypical substrate transported with high apparent affinity, but low maximum velocity. Therefore, exhibits the transport characteristics of the nucleoside transport system cit or N2 subtype (N2/cit). Involved in renal nucleoside (re)absorption. In Rattus norvegicus (Rat), this protein is Sodium/nucleoside cotransporter 1.